A 529-amino-acid chain; its full sequence is Bifunctional purine biosynthesis protein PurH (529 aa).

In terms of domain architecture, MGS-like spans methionine 1–valine 148.

It belongs to the PurH family.

It carries out the reaction (6R)-10-formyltetrahydrofolate + 5-amino-1-(5-phospho-beta-D-ribosyl)imidazole-4-carboxamide = 5-formamido-1-(5-phospho-D-ribosyl)imidazole-4-carboxamide + (6S)-5,6,7,8-tetrahydrofolate. The enzyme catalyses IMP + H2O = 5-formamido-1-(5-phospho-D-ribosyl)imidazole-4-carboxamide. It participates in purine metabolism; IMP biosynthesis via de novo pathway; 5-formamido-1-(5-phospho-D-ribosyl)imidazole-4-carboxamide from 5-amino-1-(5-phospho-D-ribosyl)imidazole-4-carboxamide (10-formyl THF route): step 1/1. Its pathway is purine metabolism; IMP biosynthesis via de novo pathway; IMP from 5-formamido-1-(5-phospho-D-ribosyl)imidazole-4-carboxamide: step 1/1. This is Bifunctional purine biosynthesis protein PurH from Salmonella schwarzengrund (strain CVM19633).